Here is a 315-residue protein sequence, read N- to C-terminus: GTP cyclohydrolase MptA (315 aa).

The protein belongs to the GTP cyclohydrolase IV family. Homodimer. Fe(2+) is required as a cofactor.

The catalysed reaction is GTP + H2O = 7,8-dihydroneopterin 2',3'-cyclic phosphate + formate + diphosphate + H(+). It functions in the pathway cofactor biosynthesis; 5,6,7,8-tetrahydromethanopterin biosynthesis. In terms of biological role, converts GTP to 7,8-dihydro-D-neopterin 2',3'-cyclic phosphate, the first intermediate in the biosynthesis of coenzyme methanopterin. This Methanococcus maripaludis (strain C5 / ATCC BAA-1333) protein is GTP cyclohydrolase MptA.